A 126-amino-acid polypeptide reads, in one-letter code: CD59 glycoprotein (126 aa).

Positions 1–22 (MRARRGFILLLLLAVLCSTGVS) are cleaved as a signal peptide. Residues 23 to 110 (LRCYNCLDPV…NGAISLLGKT (88 aa)) form the UPAR/Ly6 domain. 5 disulfide bridges follow: C25–C48, C28–C35, C41–C61, C67–C85, and C86–C91. N38 is a glycosylation site (N-linked (GlcNAc...) asparagine). N101 is lipidated: GPI-anchor amidated asparagine. Residues 102–126 (GAISLLGKTALLVTSVLAAILKPCF) constitute a propeptide, removed in mature form.

Interacts with T-cell surface antigen CD2. N- and O-glycosylated.

Its subcellular location is the cell membrane. It localises to the secreted. Its function is as follows. Potent inhibitor of the complement membrane attack complex (MAC) action, which protects self-cells from damage during complement activation. Acts by binding to the beta-haipins of C8 (C8A and C8B) components of the assembling MAC, forming an intermolecular beta-sheet that prevents incorporation of the multiple copies of C9 required for complete formation of the osmolytic pore. The protein is CD59 glycoprotein of Rattus norvegicus (Rat).